A 346-amino-acid polypeptide reads, in one-letter code: MSEPARLISPEKRGEDLDITLRPQSLDEFTGQAEARANLKVFIEAAKNRGEALDHVLFVGPPGLGKTTLAQIMAKELGVNFRSTSGPVIAKAGDLAALLTNLEERDVLFIDEIHRLNPAVEEILYPAMEDFQLDLIIGEGPAARSVKIDLSKFTLVAATTRLGLLTTPLRDRFGIPVRLSFYTVEELELIVRRGARLMNLPITEEGAREIARRARGTPRIAGRLLRRVRDFAEVARAEAVTREIADEALTRLLVDNVGFDQLDKRYLNMIAVNFGGGPVGIETIAAGLSEPRDAIEDIIEPYMIQQGFIQRTPRGRVLTAIAWKHLGMQPPKEMEAAQFRLFQEDN.

The tract at residues methionine 1–tyrosine 182 is large ATPase domain (RuvB-L). ATP is bound by residues leucine 21, arginine 22, glycine 63, lysine 66, threonine 67, threonine 68, glutamate 129 to phenylalanine 131, arginine 172, tyrosine 182, and arginine 219. Threonine 67 contacts Mg(2+). The small ATPAse domain (RuvB-S) stretch occupies residues threonine 183–leucine 253. The tract at residues asparagine 256–asparagine 346 is head domain (RuvB-H). DNA contacts are provided by arginine 292, arginine 311, and arginine 316.

The protein belongs to the RuvB family. Homohexamer. Forms an RuvA(8)-RuvB(12)-Holliday junction (HJ) complex. HJ DNA is sandwiched between 2 RuvA tetramers; dsDNA enters through RuvA and exits via RuvB. An RuvB hexamer assembles on each DNA strand where it exits the tetramer. Each RuvB hexamer is contacted by two RuvA subunits (via domain III) on 2 adjacent RuvB subunits; this complex drives branch migration. In the full resolvosome a probable DNA-RuvA(4)-RuvB(12)-RuvC(2) complex forms which resolves the HJ.

It is found in the cytoplasm. The enzyme catalyses ATP + H2O = ADP + phosphate + H(+). Its function is as follows. The RuvA-RuvB-RuvC complex processes Holliday junction (HJ) DNA during genetic recombination and DNA repair, while the RuvA-RuvB complex plays an important role in the rescue of blocked DNA replication forks via replication fork reversal (RFR). RuvA specifically binds to HJ cruciform DNA, conferring on it an open structure. The RuvB hexamer acts as an ATP-dependent pump, pulling dsDNA into and through the RuvAB complex. RuvB forms 2 homohexamers on either side of HJ DNA bound by 1 or 2 RuvA tetramers; 4 subunits per hexamer contact DNA at a time. Coordinated motions by a converter formed by DNA-disengaged RuvB subunits stimulates ATP hydrolysis and nucleotide exchange. Immobilization of the converter enables RuvB to convert the ATP-contained energy into a lever motion, pulling 2 nucleotides of DNA out of the RuvA tetramer per ATP hydrolyzed, thus driving DNA branch migration. The RuvB motors rotate together with the DNA substrate, which together with the progressing nucleotide cycle form the mechanistic basis for DNA recombination by continuous HJ branch migration. Branch migration allows RuvC to scan DNA until it finds its consensus sequence, where it cleaves and resolves cruciform DNA. The chain is Holliday junction branch migration complex subunit RuvB from Rhizobium leguminosarum bv. trifolii (strain WSM2304).